We begin with the raw amino-acid sequence, 232 residues long: Phosphatidylserine decarboxylase proenzyme (232 aa).

The active-site Schiff-base intermediate with substrate; via pyruvic acid is the S190. S190 carries the pyruvic acid (Ser); by autocatalysis modification.

This sequence belongs to the phosphatidylserine decarboxylase family. PSD-A subfamily. Heterodimer of a large membrane-associated beta subunit and a small pyruvoyl-containing alpha subunit. The cofactor is pyruvate. In terms of processing, is synthesized initially as an inactive proenzyme. Formation of the active enzyme involves a self-maturation process in which the active site pyruvoyl group is generated from an internal serine residue via an autocatalytic post-translational modification. Two non-identical subunits are generated from the proenzyme in this reaction, and the pyruvate is formed at the N-terminus of the alpha chain, which is derived from the carboxyl end of the proenzyme. The post-translation cleavage follows an unusual pathway, termed non-hydrolytic serinolysis, in which the side chain hydroxyl group of the serine supplies its oxygen atom to form the C-terminus of the beta chain, while the remainder of the serine residue undergoes an oxidative deamination to produce ammonia and the pyruvoyl prosthetic group on the alpha chain.

The protein resides in the cell membrane. It catalyses the reaction a 1,2-diacyl-sn-glycero-3-phospho-L-serine + H(+) = a 1,2-diacyl-sn-glycero-3-phosphoethanolamine + CO2. Its pathway is phospholipid metabolism; phosphatidylethanolamine biosynthesis; phosphatidylethanolamine from CDP-diacylglycerol: step 2/2. Its function is as follows. Catalyzes the formation of phosphatidylethanolamine (PtdEtn) from phosphatidylserine (PtdSer). This chain is Phosphatidylserine decarboxylase proenzyme, found in Rhodopseudomonas palustris (strain HaA2).